The primary structure comprises 337 residues: DNA-directed RNA polymerase subunit alpha (337 aa).

The interval 1 to 233 (MIQKNWQELI…DQLSIFVNFE (233 aa)) is alpha N-terminal domain (alpha-NTD). The alpha C-terminal domain (alpha-CTD) stretch occupies residues 249–337 (FNPALLKKVD…DLAKRYEDQY (89 aa)).

It belongs to the RNA polymerase alpha chain family. In terms of assembly, homodimer. The RNAP catalytic core consists of 2 alpha, 1 beta, 1 beta' and 1 omega subunit. When a sigma factor is associated with the core the holoenzyme is formed, which can initiate transcription.

It catalyses the reaction RNA(n) + a ribonucleoside 5'-triphosphate = RNA(n+1) + diphosphate. DNA-dependent RNA polymerase catalyzes the transcription of DNA into RNA using the four ribonucleoside triphosphates as substrates. This Brucella suis (strain ATCC 23445 / NCTC 10510) protein is DNA-directed RNA polymerase subunit alpha.